The sequence spans 206 residues: Protein-methionine-sulfoxide reductase heme-binding subunit MsrQ (206 aa).

The next 4 helical transmembrane spans lie at 8–28 (IVWL…WLVW), 82–102 (LWCF…ELGI), 116–136 (PYLT…LTST), and 153–173 (FVYL…KILS).

The protein belongs to the MsrQ family. Heterodimer of a catalytic subunit (MsrP) and a heme-binding subunit (MsrQ). It depends on FMN as a cofactor. Heme b serves as cofactor.

Its subcellular location is the cell inner membrane. Its function is as follows. Part of the MsrPQ system that repairs oxidized periplasmic proteins containing methionine sulfoxide residues (Met-O), using respiratory chain electrons. Thus protects these proteins from oxidative-stress damage caused by reactive species of oxygen and chlorine generated by the host defense mechanisms. MsrPQ is essential for the maintenance of envelope integrity under bleach stress, rescuing a wide series of structurally unrelated periplasmic proteins from methionine oxidation. MsrQ provides electrons for reduction to the reductase catalytic subunit MsrP, using the quinone pool of the respiratory chain. The polypeptide is Protein-methionine-sulfoxide reductase heme-binding subunit MsrQ (Citrobacter koseri (strain ATCC BAA-895 / CDC 4225-83 / SGSC4696)).